Here is a 99-residue protein sequence, read N- to C-terminus: Class II hydrophobin B (99 aa).

The signal sequence occupies residues 1–15 (MKFFAIAALFAGALA). Disulfide bonds link Cys30–Cys79 and Cys40–Cys70.

This sequence belongs to the cerato-ulmin hydrophobin family.

It localises to the secreted. The protein localises to the cell wall. It is found in the vacuole. The protein resides in the cytoplasmic vesicle. Aerial growth, conidiation, and dispersal of filamentous fungi in the environment rely upon a capability of their secreting small amphipathic proteins called hydrophobins (HPBs) with low sequence identity. Class I can self-assemble into an outermost layer of rodlet bundles on aerial cell surfaces, conferring cellular hydrophobicity that supports fungal growth, development and dispersal; whereas Class II form highly ordered films at water-air interfaces through intermolecular interactions but contribute nothing to the rodlet structure. Hyd2B contributes to certain cell wall-related features, such as hydrophobicity but is not involved in cell wall-related events during fungal proliferation in host hemocoel. Does not contribute to conidial hydrophobicity. Involved in insect hemocoel colonization independent of cell hydrophobicity. The protein is Class II hydrophobin B of Beauveria bassiana (strain ARSEF 2860) (White muscardine disease fungus).